We begin with the raw amino-acid sequence, 103 residues long: Large ribosomal subunit protein bL21 (103 aa).

The protein belongs to the bacterial ribosomal protein bL21 family. As to quaternary structure, part of the 50S ribosomal subunit. Contacts protein L20.

This protein binds to 23S rRNA in the presence of protein L20. The protein is Large ribosomal subunit protein bL21 of Cupriavidus metallidurans (strain ATCC 43123 / DSM 2839 / NBRC 102507 / CH34) (Ralstonia metallidurans).